A 1335-amino-acid polypeptide reads, in one-letter code: Bifunctional autolysin (1335 aa).

The signal sequence occupies residues 1-29; sequence MAKKFNYKLPSMVALTLFGTAFTAHQANA. Disordered regions lie at residues 51–88, 100–262, and 514–535; these read QAEKAKSEVTQSTTNVSGTQTYQDPTQVQPKQDTQSTT, NEIS…KYKE, and WGTTSTKPSQPSKPSGGTNNKL. Polar residues-rich tracts occupy residues 58-88, 100-127, 143-155, 176-223, and 244-258; these read EVTQSTTNVSGTQTYQDPTQVQPKQDTQSTT, NEISSNQKQQSLSTDDANQNQTNSVTKN, TDTNQLQETQSVA, TASQ…NASG, and SLNNVNATSKQTTSY. Residues 303–863 are N-acetylmuramoyl-L-alanine amidase; it reads VSSQKTSSLP…LSTQSTPAPK (561 aa). A compositionally biased stretch (low complexity) spans 515 to 531; it reads GTTSTKPSQPSKPSGGT. GW domains are found at residues 533 to 610, 612 to 686, 700 to 774, 776 to 850, 868 to 943, 945 to 1020, and 1023 to 1096; these read NKLT…YNTA, APVK…TASK, TVTN…YNTA, SPVK…APSK, STQT…TQNI, KQTQ…QNST, and QSTP…KEKI. The segment at 864 to 1335 is endo-beta-N-acetylglucosaminidase; that stretch reads QVKPSTQTVN…GKYFEIPIYK (472 aa).

It in the N-terminal section; belongs to the N-acetylmuramoyl-L-alanine amidase 2 family. The protein in the C-terminal section; belongs to the glycosyl hydrolase 73 family. As to quaternary structure, oligomer; forms a ring structure at the cell surface which is important for efficient partitioning of daughter cells after cell division. Undergoes proteolytic processing to generate the two extracellular lytic enzymes, probably at the septal region on the cell surface.

Its subcellular location is the secreted. It carries out the reaction Hydrolyzes the link between N-acetylmuramoyl residues and L-amino acid residues in certain cell-wall glycopeptides.. It catalyses the reaction an N(4)-(oligosaccharide-(1-&gt;3)-[oligosaccharide-(1-&gt;6)]-beta-D-Man-(1-&gt;4)-beta-D-GlcNAc-(1-&gt;4)-alpha-D-GlcNAc)-L-asparaginyl-[protein] + H2O = an oligosaccharide-(1-&gt;3)-[oligosaccharide-(1-&gt;6)]-beta-D-Man-(1-&gt;4)-D-GlcNAc + N(4)-(N-acetyl-beta-D-glucosaminyl)-L-asparaginyl-[protein]. Endohydrolysis of the di-N-acetylchitobiosyl unit in high-mannose glycopeptides and glycoproteins containing the -[(Man)5(GlcNAc)2]-Asn structure. One N-acetyl-D-glucosamine residue remains attached to the protein; the rest of the oligosaccharide is released intact. Cleaves the peptidoglycan connecting the daughter cells at the end of the cell division cycle, resulting in the separation of the two newly divided cells. Acts as an autolysin in penicillin-induced lysis. The polypeptide is Bifunctional autolysin (atl) (Staphylococcus epidermidis (strain ATCC 12228 / FDA PCI 1200)).